Here is a 255-residue protein sequence, read N- to C-terminus: ETS-related transcription factor Elf-5 (255 aa).

The PNT domain maps to 33–119 (YPAFEHQTAC…FILQSIRSQG (87 aa)). Residues 163–244 (SHLWEFVRDL…VDRRLVYKFG (82 aa)) constitute a DNA-binding region (ETS).

It belongs to the ETS family.

It is found in the nucleus. Transcriptionally activator that may play a role in regulating the later stages of keratinocytes terminal differentiation. Binds to DNA sequences containing the consensus nucleotide core sequence GGA[AT]. This Bos taurus (Bovine) protein is ETS-related transcription factor Elf-5 (ELF5).